The primary structure comprises 195 residues: Molybdenum cofactor guanylyltransferase (195 aa).

GTP-binding positions include 10 to 12, Lys-23, Asn-51, Asp-69, and Asp-99; that span reads LAG. Residue Asp-99 participates in Mg(2+) binding.

The protein belongs to the MobA family. As to quaternary structure, monomer. Requires Mg(2+) as cofactor.

Its subcellular location is the cytoplasm. It carries out the reaction Mo-molybdopterin + GTP + H(+) = Mo-molybdopterin guanine dinucleotide + diphosphate. In terms of biological role, transfers a GMP moiety from GTP to Mo-molybdopterin (Mo-MPT) cofactor (Moco or molybdenum cofactor) to form Mo-molybdopterin guanine dinucleotide (Mo-MGD) cofactor. This chain is Molybdenum cofactor guanylyltransferase, found in Shewanella putrefaciens (strain CN-32 / ATCC BAA-453).